Consider the following 911-residue polypeptide: MDNNPNINECIPYNCLSNPEVEVLGGERIETGYTPIDISLSLTQFLLSEFVPGAGFVLGLVDIIWEIFSVLSSDAFLVQIEQLINQRIEEFARNQAISRLEGLSNLYQIYAESFREWEADPTNPALREEMRIQFNDMNSALTTAIPLFAVQNYQVPLLSVYVTCNYIISSESVMCGQRSGFDAATINSRYNDLTRLIGNYTDHAVRWYNTGLERVWGPDSRDWIRYNQFRRELTLTVLDIVSLFPNYDSRTYPIRTVSQLTREIYTNPVLENFDGSFRGSAQGIEGSIRSPHLMDILNSITIYTDAHRGEYYWSGHQIMASPVGFSGPEFTFPLYGTMGNSAPQQRIVAQLGQGVYRTLSSTLYRRPFNIGINNQQLSVLDGTEFAYGTSSNLPSAVYRKSGTVDSLDEIPPQNNNVPPRQGFSHRLSHVSMFRSGFSNSSVSIIRAPMFSWIHRSAEFNNIIPSSQITQIPLTKSTNLGSGTSVVKGPGFTGGDILRRTSPGQISTLRVNITAPLSQRYRVRILYASTTNLQFHTSIDGRPINQGNFSATMSSGRNLQSGSLRTVGFTTPFNFSNGSSVFTLSAHVFNSGNEVYIDRIEFVPAEVTFEAEYDLERAQKAVNELFTSSNQIGLKTDVTDYHIDQVSNLVECLSDEFCLDEKKELSEKVKHAKRLSDERNLLQDPNFRGINRQLDRGWRRSTDITTQGGDDFFQENYVTLLGTLMGFPSIYIKKWWFEIKSLYPLPIRGYIEDSQDLEIYLIRYNAKHETVNVPGTVPYGRFQPQVPIGKCAHHSHHFSLDIDVGCTDLNEDLGVWVIFKIKTQDGHARLGNLEFLEEKPLVGEALARVKRAEKKWRDKREKLEWETNIVYKEAKESVDALFVNSQYDRLQADTNIAMIHAADKRVHSIREA.

This sequence belongs to the delta endotoxin family.

Its function is as follows. Promotes colloidosmotic lysis by binding to the midgut epithelial cells of both dipteran and lepidopteran larvae. The chain is Pesticidal crystal protein Cry1Af (cry1Af) from Bacillus thuringiensis.